The sequence spans 101 residues: Urease subunit beta (101 aa).

The protein belongs to the urease beta subunit family. In terms of assembly, heterotrimer of UreA (gamma), UreB (beta) and UreC (alpha) subunits. Three heterotrimers associate to form the active enzyme.

The protein resides in the cytoplasm. It catalyses the reaction urea + 2 H2O + H(+) = hydrogencarbonate + 2 NH4(+). The protein operates within nitrogen metabolism; urea degradation; CO(2) and NH(3) from urea (urease route): step 1/1. In Allorhizobium ampelinum (strain ATCC BAA-846 / DSM 112012 / S4) (Agrobacterium vitis (strain S4)), this protein is Urease subunit beta.